A 316-amino-acid chain; its full sequence is Pantothenate kinase (316 aa).

95-102 (GSVAVGKS) lines the ATP pocket.

The protein belongs to the prokaryotic pantothenate kinase family.

It is found in the cytoplasm. It carries out the reaction (R)-pantothenate + ATP = (R)-4'-phosphopantothenate + ADP + H(+). It participates in cofactor biosynthesis; coenzyme A biosynthesis; CoA from (R)-pantothenate: step 1/5. In Shewanella oneidensis (strain ATCC 700550 / JCM 31522 / CIP 106686 / LMG 19005 / NCIMB 14063 / MR-1), this protein is Pantothenate kinase.